We begin with the raw amino-acid sequence, 240 residues long: MTEIFSSLYGQPDSQGPAGPSALGFGSGKPQVPQNMGPMCFPHQMMEEGAPVRKPAAMNEPFYLLRELPMENELTGHTNLITHYNLEHAYNKFCGKKVKEKLSNFLPELPGMIDSPGIQDNSSLRSLIEKPPVCNNSFSPLTGAMLTGFRLHTGPLPEQYRLMHIQPPKKKNKHKHKHHRPQDPLPPETPSDSDHKKKKKKKDDDPDRKKKKKDKKKKKNRHSPDHPGMTGAQPSTSSLR.

Over residues 1–14 the composition is skewed to polar residues; the sequence is MTEIFSSLYGQPDS. Disordered regions lie at residues 1–29 and 168–240; these read MTEI…GSGK and PKKK…SSLR. 2 stretches are compositionally biased toward basic residues: residues 168-180 and 209-221; these read PKKK…KHHR and KKKK…KKNR.

This sequence belongs to the Mediator complex subunit 19 family. In terms of assembly, component of the Mediator complex.

The protein resides in the nucleus. In terms of biological role, component of the Mediator complex, a coactivator involved in the regulated transcription of nearly all RNA polymerase II-dependent genes. Mediator functions as a bridge to convey information from gene-specific regulatory proteins to the basal RNA polymerase II transcription machinery. Mediator is recruited to promoters by direct interactions with regulatory proteins and serves as a scaffold for the assembly of a functional preinitiation complex with RNA polymerase II and the general transcription factors. The protein is Mediator of RNA polymerase II transcription subunit 19-B (med19b) of Danio rerio (Zebrafish).